The following is a 421-amino-acid chain: Exopolysaccharide production protein ExoF (421 aa).

The signal sequence occupies residues 1–31; the sequence is MQSNRRSGKSAGSRMVSCFTRLALLAALAAS.

It is found in the periplasm. The protein operates within glycan metabolism; exopolysaccharide biosynthesis. In terms of biological role, involved in succinoglycan (EPS I) synthesis. Needed for the addition of the first sugar (galactose) to the isoprenoid carrier. This is Exopolysaccharide production protein ExoF (exoF) from Rhizobium meliloti (strain 1021) (Ensifer meliloti).